The sequence spans 179 residues: Large ribosomal subunit protein uL6 (179 aa).

This sequence belongs to the universal ribosomal protein uL6 family. In terms of assembly, part of the 50S ribosomal subunit.

In terms of biological role, this protein binds to the 23S rRNA, and is important in its secondary structure. It is located near the subunit interface in the base of the L7/L12 stalk, and near the tRNA binding site of the peptidyltransferase center. The protein is Large ribosomal subunit protein uL6 of Streptomyces griseus subsp. griseus (strain JCM 4626 / CBS 651.72 / NBRC 13350 / KCC S-0626 / ISP 5235).